The sequence spans 344 residues: Anthranilate phosphoribosyltransferase 2 (344 aa).

Residues Gly-81, 84 to 85 (GD), Thr-89, 91 to 94 (NIST), 109 to 117 (KHGNRALSS), and Ala-121 contribute to the 5-phospho-alpha-D-ribose 1-diphosphate site. Residue Gly-81 coordinates anthranilate. Residue Ser-93 coordinates Mg(2+). Asn-112 lines the anthranilate pocket. Arg-167 contributes to the anthranilate binding site. The Mg(2+) site is built by Asp-226 and Glu-227.

The protein belongs to the anthranilate phosphoribosyltransferase family. Homodimer. The cofactor is Mg(2+).

It catalyses the reaction N-(5-phospho-beta-D-ribosyl)anthranilate + diphosphate = 5-phospho-alpha-D-ribose 1-diphosphate + anthranilate. It functions in the pathway amino-acid biosynthesis; L-tryptophan biosynthesis; L-tryptophan from chorismate: step 2/5. In terms of biological role, catalyzes the transfer of the phosphoribosyl group of 5-phosphorylribose-1-pyrophosphate (PRPP) to anthranilate to yield N-(5'-phosphoribosyl)-anthranilate (PRA). The polypeptide is Anthranilate phosphoribosyltransferase 2 (Ralstonia nicotianae (strain ATCC BAA-1114 / GMI1000) (Ralstonia solanacearum)).